An 83-amino-acid polypeptide reads, in one-letter code: Putative defensin-like protein 111 (83 aa).

Positions 1–24 (MAITKKILLPFVLTILFVISSVHC) are cleaved as a signal peptide. 4 disulfide bridges follow: Cys40/Cys80, Cys46/Cys69, Cys54/Cys78, and Cys58/Cys79.

It belongs to the DEFL family.

Its subcellular location is the secreted. The protein is Putative defensin-like protein 111 (LCR50) of Arabidopsis thaliana (Mouse-ear cress).